A 633-amino-acid chain; its full sequence is DNA mismatch repair protein MutL (633 aa).

The protein belongs to the DNA mismatch repair MutL/HexB family.

This protein is involved in the repair of mismatches in DNA. It is required for dam-dependent methyl-directed DNA mismatch repair. May act as a 'molecular matchmaker', a protein that promotes the formation of a stable complex between two or more DNA-binding proteins in an ATP-dependent manner without itself being part of a final effector complex. This Pseudomonas fluorescens (strain SBW25) protein is DNA mismatch repair protein MutL.